Here is a 544-residue protein sequence, read N- to C-terminus: Protein adenylyltransferase (544 aa).

The Fido domain maps to F63–D216. Residues F93–A94, R106–T107, E163–R167, and R170 contribute to the ATP site.

It is found in the secreted. It carries out the reaction L-tyrosyl-[protein] + ATP = O-(5'-adenylyl)-L-tyrosyl-[protein] + diphosphate. The enzyme catalyses L-threonyl-[protein] + ATP = 3-O-(5'-adenylyl)-L-threonyl-[protein] + diphosphate. In terms of biological role, adenylyltransferase involved in virulence by mediating the addition of adenosine 5'-monophosphate (AMP) to specific residue of host target proteins. In Bartonella henselae (strain ATCC 49882 / DSM 28221 / CCUG 30454 / Houston 1) (Rochalimaea henselae), this protein is Protein adenylyltransferase (bepA).